A 582-amino-acid chain; its full sequence is Calcium-dependent protein kinase 24 (582 aa).

The interval 1-36 (MGSCVSSPLKGSPFGKRPVRRRHSSNSRTSSVPRFD) is disordered. Glycine 2 is lipidated: N-myristoyl glycine. A Protein kinase domain is found at 66–324 (YDLGKELGRG…VQEVLEHPWI (259 aa)). Residues 72 to 80 (LGRGEFGVT) and lysine 95 contribute to the ATP site. Residue aspartate 190 is the Proton acceptor of the active site. Position 230 is a phosphoserine (serine 230). The segment at 330 to 360 (APNVNLGDNVRTKIQQFLLMNRFKKKVLRIV) is autoinhibitory domain. EF-hand domains lie at 367–402 (EEIA…IGQV), 403–438 (VPDG…LKRM), 439–474 (GCDE…DKLG), and 478–513 (GNDQ…GTDW). Positions 380, 382, 384, 386, 391, 416, 418, 420, 422, 427, 452, 454, 456, 463, 491, 493, 495, and 497 each coordinate Ca(2+). Residue serine 499 is modified to Phosphoserine. Glutamate 502 contacts Ca(2+).

The protein belongs to the protein kinase superfamily. Ser/Thr protein kinase family. CDPK subfamily.

It is found in the membrane. The enzyme catalyses L-seryl-[protein] + ATP = O-phospho-L-seryl-[protein] + ADP + H(+). The catalysed reaction is L-threonyl-[protein] + ATP = O-phospho-L-threonyl-[protein] + ADP + H(+). Its activity is regulated as follows. Activated by calcium. Autophosphorylation may play an important role in the regulation of the kinase activity. May play a role in signal transduction pathways that involve calcium as a second messenger. The polypeptide is Calcium-dependent protein kinase 24 (CPK24) (Arabidopsis thaliana (Mouse-ear cress)).